A 419-amino-acid chain; its full sequence is Protein transport protein sec9 (419 aa).

The segment covering 1-11 (MKKLFKKKKGV) has biased composition (basic residues). Disordered regions lie at residues 1–60 (MKKL…TYGS), 116–143 (ARKDMPPMKSSAAVTERPSMHRSAPSQD), and 156–186 (ARIQNDDESTTDTIPHNDDGTEGDEYGEGYR). A compositionally biased stretch (polar residues) spans 21–32 (ESNSNTATNAPS). The span at 36-60 (GGTTANSYSSNSYNDNNNSNSTYGS) shows a compositional bias: low complexity. Serine 141 is modified (phosphoserine). 2 consecutive t-SNARE coiled-coil homology domains span residues 203–265 (QFVK…AREL) and 356–418 (DAME…LRHI).

The protein belongs to the SNAP-25 family.

Has a role in cell separation, a final step of cytokinesis and in the assembly of the forespore membrane. May have a role in the transport of secretory proteins to these growing sites. The sequence is that of Protein transport protein sec9 (sec9) from Schizosaccharomyces pombe (strain 972 / ATCC 24843) (Fission yeast).